Here is a 92-residue protein sequence, read N- to C-terminus: Probable Fe(2+)-trafficking protein (92 aa).

It belongs to the Fe(2+)-trafficking protein family.

Could be a mediator in iron transactions between iron acquisition and iron-requiring processes, such as synthesis and/or repair of Fe-S clusters in biosynthetic enzymes. The chain is Probable Fe(2+)-trafficking protein from Shewanella oneidensis (strain ATCC 700550 / JCM 31522 / CIP 106686 / LMG 19005 / NCIMB 14063 / MR-1).